We begin with the raw amino-acid sequence, 46 residues long: Protein PsbN (46 aa).

A helical transmembrane segment spans residues 10–30; sequence VAIAVLAALLGLTGFGVYTAF.

The protein belongs to the PsbN family.

It localises to the cellular thylakoid membrane. Functionally, may play a role in photosystem I and II biogenesis. This Synechococcus sp. (strain CC9311) protein is Protein PsbN.